The chain runs to 145 residues: Phosphoribosyl-AMP cyclohydrolase (145 aa).

Position 87 (aspartate 87) interacts with Mg(2+). Position 88 (cysteine 88) interacts with Zn(2+). Residues aspartate 89 and aspartate 91 each contribute to the Mg(2+) site. Cysteine 104 and cysteine 111 together coordinate Zn(2+).

Belongs to the PRA-CH family. Homodimer. The cofactor is Mg(2+). It depends on Zn(2+) as a cofactor.

It localises to the cytoplasm. The enzyme catalyses 1-(5-phospho-beta-D-ribosyl)-5'-AMP + H2O = 1-(5-phospho-beta-D-ribosyl)-5-[(5-phospho-beta-D-ribosylamino)methylideneamino]imidazole-4-carboxamide. It functions in the pathway amino-acid biosynthesis; L-histidine biosynthesis; L-histidine from 5-phospho-alpha-D-ribose 1-diphosphate: step 3/9. Its function is as follows. Catalyzes the hydrolysis of the adenine ring of phosphoribosyl-AMP. The polypeptide is Phosphoribosyl-AMP cyclohydrolase (Nitrobacter winogradskyi (strain ATCC 25391 / DSM 10237 / CIP 104748 / NCIMB 11846 / Nb-255)).